The primary structure comprises 93 residues: uncharacterized protein (93 aa).

Transmembrane regions (helical) follow at residues 9–29, 40–60, and 66–86; these read ITVI…PQLI, ISLA…IYGI, and PIIV…YLKI.

The protein localises to the cell membrane. This is an uncharacterized protein from Methanocaldococcus jannaschii (strain ATCC 43067 / DSM 2661 / JAL-1 / JCM 10045 / NBRC 100440) (Methanococcus jannaschii).